The chain runs to 264 residues: MLLLSLTLSLVLLGSSWGCGIPAIKPALSFSQRIVNGENAVLGSWPWQVSLQDSSGFHFCGGSLISQSWVVTAAHCNVSPGRHFVVLGEYDRSSNAEPLQVLSVSRAITHPSWNSTTMNNDVTLLKLASPAQYTTRISPVCLASSNEALTEGLTCVTTGWGRLSGVGNVTPAHLQQVALPLVTVNQCRQYWGSSITDSMICAGGAGASSCQGDSGGPLVCQKGNTWVLIGIVSWGTKNCNVRAPAVYTRVSKFSTWINQVIAYN.

The first 18 residues, 1–18 (MLLLSLTLSLVLLGSSWG), serve as a signal peptide directing secretion. The propeptide at 19 to 33 (CGIPAIKPALSFSQR) is activation peptide. Intrachain disulfides connect Cys-19/Cys-141, Cys-60/Cys-76, Cys-155/Cys-220, Cys-187/Cys-201, and Cys-210/Cys-239. A Peptidase S1 domain is found at 34-262 (IVNGENAVLG…FSTWINQVIA (229 aa)). His-75 serves as the catalytic Charge relay system. A glycan (N-linked (GlcNAc...) asparagine) is linked at Asn-114. The Charge relay system role is filled by Asp-121. Ser-214 acts as the Charge relay system in catalysis.

Belongs to the peptidase S1 family.

This is Chymotrypsin-like protease CTRL-1 (CTRL) from Homo sapiens (Human).